A 274-amino-acid chain; its full sequence is Ubiquinone biosynthesis protein COQ4 homolog, mitochondrial (274 aa).

The transit peptide at 1–20 (MLRQTAFRSMKLNRTPGRYF) directs the protein to the mitochondrion. Positions 13-40 (NRTPGRYFTTAENMDTGSSQSPPDTEQK) are disordered. Positions 22 to 36 (TAENMDTGSSQSPPD) are enriched in polar residues. Zn(2+) contacts are provided by histidine 177, aspartate 178, histidine 181, and glutamate 193.

The protein belongs to the COQ4 family. Component of a multi-subunit COQ enzyme complex. The cofactor is Zn(2+).

The protein resides in the mitochondrion inner membrane. The enzyme catalyses a 4-hydroxy-3-methoxy-5-(all-trans-polyprenyl)benzoate + H(+) = a 2-methoxy-6-(all-trans-polyprenyl)phenol + CO2. Its pathway is cofactor biosynthesis; ubiquinone biosynthesis. Functionally, lyase that catalyzes the C1-decarboxylation of 4-hydroxy-3-methoxy-5-(all-trans-polyprenyl)benzoic acid into 2-methoxy-6-(all-trans-polyprenyl)phenol during ubiquinone biosynthesis. The sequence is that of Ubiquinone biosynthesis protein COQ4 homolog, mitochondrial from Aedes aegypti (Yellowfever mosquito).